Consider the following 498-residue polypeptide: Pup deamidase/depupylase (498 aa).

Gly6–Glu10 provides a ligand contact to ATP. 2 residues coordinate Mg(2+): Glu8 and Tyr93. The active-site Proton acceptor is Asp95. Position 100 (Glu100) interacts with Mg(2+). Ser102–Ala103 contributes to the ATP binding site. Mg(2+) is bound at residue His156. 2 residues coordinate ATP: Asn158 and Arg240. His242 serves as a coordination point for Mg(2+).

It belongs to the Pup ligase/Pup deamidase family. Pup deamidase subfamily. ATP serves as cofactor.

The catalysed reaction is [prokaryotic ubiquitin-like protein]-C-terminal-L-glutamine + H2O = [prokaryotic ubiquitin-like protein]-C-terminal-L-glutamate + NH4(+). Its pathway is protein degradation; proteasomal Pup-dependent pathway. In terms of biological role, specifically catalyzes the deamidation of the C-terminal glutamine of the prokaryotic ubiquitin-like protein Pup to glutamate, thereby rendering Pup competent for conjugation. Probably also displays depupylase (DPUP) activity, removing conjugated Pup from target proteins; thus may be involved in the recycling of Pup and may function similarly to deubiquitinases (DUBs) in eukaryotes to prevent or promote proteasomal degradation of certain proteins. This is Pup deamidase/depupylase (dop) from Mycolicibacterium smegmatis (strain ATCC 700084 / mc(2)155) (Mycobacterium smegmatis).